A 221-amino-acid polypeptide reads, in one-letter code: ATP phosphoribosyltransferase (221 aa).

It belongs to the ATP phosphoribosyltransferase family. Short subfamily. In terms of assembly, heteromultimer composed of HisG and HisZ subunits.

The protein localises to the cytoplasm. The enzyme catalyses 1-(5-phospho-beta-D-ribosyl)-ATP + diphosphate = 5-phospho-alpha-D-ribose 1-diphosphate + ATP. The protein operates within amino-acid biosynthesis; L-histidine biosynthesis; L-histidine from 5-phospho-alpha-D-ribose 1-diphosphate: step 1/9. Functionally, catalyzes the condensation of ATP and 5-phosphoribose 1-diphosphate to form N'-(5'-phosphoribosyl)-ATP (PR-ATP). Has a crucial role in the pathway because the rate of histidine biosynthesis seems to be controlled primarily by regulation of HisG enzymatic activity. This chain is ATP phosphoribosyltransferase, found in Rhizorhabdus wittichii (strain DSM 6014 / CCUG 31198 / JCM 15750 / NBRC 105917 / EY 4224 / RW1) (Sphingomonas wittichii).